The following is a 477-amino-acid chain: MKVTLPEFERAGVMVVGDVMLDRYWYGPSSRISPEAPVPVVKVNTIEERPGGAANVAMNIASLGANARLVGLTGIDDAARALSKSLADVNVKCDFVSVPTHPTITKLRVLSRNQQLIRLDFEEGFEGVDPQPLHERINQALSSIGALVLSDYAKGALASVQQMIQLARKAGVPVLIDPKGTDFERYRGATLLTPNLSEFEAVVGKCKTEEEIVERGMKLIADYELSALLVTRSEQGMSLLQPGKAPLHMPTQAQEVYDVTGAGDTVIGVLAATLAAGNSLEEACFFANAAAGVVVGKLGTSTVSPIELENAVRGRADTGFGVMTEEELKLAVAAARKRGEKVVMTNGVFDILHAGHVSYLANARKQGDRLIVAVNSDASTKRLKGDSRPVNPLEQRMIVLGALEAVDWVVSFEEDTPQRLIAGILPDLLVKGGDYKPEEIAGSKEVWANGGEVLVLNFEDGCSTTNIIKKIQQDKKG.

Residues 1–318 (MKVTLPEFER…ENAVRGRADT (318 aa)) are ribokinase. Lys179 carries the post-translational modification N6-acetyllysine. 195–198 (NLSE) is an ATP binding site. Asp264 is an active-site residue. The cytidylyltransferase stretch occupies residues 344 to 477 (MTNGVFDILH…IKKIQQDKKG (134 aa)).

This sequence in the N-terminal section; belongs to the carbohydrate kinase PfkB family. It in the C-terminal section; belongs to the cytidylyltransferase family. In terms of assembly, homodimer.

It catalyses the reaction D-glycero-beta-D-manno-heptose 7-phosphate + ATP = D-glycero-beta-D-manno-heptose 1,7-bisphosphate + ADP + H(+). It carries out the reaction D-glycero-beta-D-manno-heptose 1-phosphate + ATP + H(+) = ADP-D-glycero-beta-D-manno-heptose + diphosphate. The protein operates within nucleotide-sugar biosynthesis; ADP-L-glycero-beta-D-manno-heptose biosynthesis; ADP-L-glycero-beta-D-manno-heptose from D-glycero-beta-D-manno-heptose 7-phosphate: step 1/4. It functions in the pathway nucleotide-sugar biosynthesis; ADP-L-glycero-beta-D-manno-heptose biosynthesis; ADP-L-glycero-beta-D-manno-heptose from D-glycero-beta-D-manno-heptose 7-phosphate: step 3/4. In terms of biological role, catalyzes the phosphorylation of D-glycero-D-manno-heptose 7-phosphate at the C-1 position to selectively form D-glycero-beta-D-manno-heptose-1,7-bisphosphate. Catalyzes the ADP transfer from ATP to D-glycero-beta-D-manno-heptose 1-phosphate, yielding ADP-D-glycero-beta-D-manno-heptose. This Shigella sonnei (strain Ss046) protein is Bifunctional protein HldE.